Here is a 444-residue protein sequence, read N- to C-terminus: Serine carboxypeptidase 2 (444 aa).

A substrate-binding site is contributed by N60–G62. 3 disulfide bridges follow: C65/C324, C222/C234, and C258/C291. N116 and N127 each carry an N-linked (GlcNAc...) asparagine glycan. E157–Y159 serves as a coordination point for substrate. Residue S158 is part of the active site. The N-linked (GlcNAc...) asparagine glycan is linked to N259. Residues I260–G286 constitute a propeptide, linker peptide. 2 N-linked (GlcNAc...) asparagine glycosylation sites follow: N312 and N318. Active-site residues include D361 and H413. R409 to H413 lines the substrate pocket.

The protein belongs to the peptidase S10 family. As to quaternary structure, carboxypeptidase II is a dimer, where each monomer is composed of two chains linked by a disulfide bond. N-glycosylated.

The catalysed reaction is Preferential release of a C-terminal arginine or lysine residue.. The protein is Serine carboxypeptidase 2 (CBP2) of Triticum aestivum (Wheat).